The following is a 718-amino-acid chain: DNA topoisomerase 1 (718 aa).

In terms of domain architecture, Toprim spans 9–151 (HEVIICEKPK…KFSTLTREEI (143 aa)). Glu15 and Asp113 together coordinate Mg(2+). Positions 162-571 (DYGQVDSGAA…EAITEVRSIL (410 aa)) constitute a Topo IA-type catalytic domain. The interaction with DNA stretch occupies residues 202–207 (SAGRVQ). Tyr320 serves as the catalytic O-(5'-phospho-DNA)-tyrosine intermediate. Positions 361–371 (HEGKKEDDAHP) are enriched in basic and acidic residues. The segment at 361–380 (HEGKKEDDAHPAIHPTGLLP) is disordered. C4-type zinc fingers lie at residues 598 to 626 (CPAC…YPDC) and 680 to 706 (CPEC…FPKC).

Belongs to the type IA topoisomerase family. Monomer. The cofactor is Mg(2+).

The catalysed reaction is ATP-independent breakage of single-stranded DNA, followed by passage and rejoining.. Its function is as follows. Releases the supercoiling and torsional tension of DNA, which is introduced during the DNA replication and transcription, by transiently cleaving and rejoining one strand of the DNA duplex. Introduces a single-strand break via transesterification at a target site in duplex DNA. The scissile phosphodiester is attacked by the catalytic tyrosine of the enzyme, resulting in the formation of a DNA-(5'-phosphotyrosyl)-enzyme intermediate and the expulsion of a 3'-OH DNA strand. The free DNA strand then undergoes passage around the unbroken strand, thus removing DNA supercoils. Finally, in the religation step, the DNA 3'-OH attacks the covalent intermediate to expel the active-site tyrosine and restore the DNA phosphodiester backbone. This Methanothermobacter thermautotrophicus (strain ATCC 29096 / DSM 1053 / JCM 10044 / NBRC 100330 / Delta H) (Methanobacterium thermoautotrophicum) protein is DNA topoisomerase 1.